Reading from the N-terminus, the 140-residue chain is uncharacterized protein (140 aa).

It belongs to the MG067/MG068/MG395 family.

This is an uncharacterized protein from Mycoplasma pneumoniae (strain ATCC 29342 / M129 / Subtype 1) (Mycoplasmoides pneumoniae).